A 43-amino-acid chain; its full sequence is Protein PsbN (43 aa).

A helical transmembrane segment spans residues 5–27; that stretch reads TLVXISISGSLVSFTGYALYTAF.

This sequence belongs to the PsbN family.

It is found in the plastid. It localises to the chloroplast thylakoid membrane. May play a role in photosystem I and II biogenesis. This chain is Protein PsbN, found in Calycanthus floridus (Eastern sweetshrub).